A 196-amino-acid polypeptide reads, in one-letter code: GTP cyclohydrolase 1 (196 aa).

Positions 85, 88, and 156 each coordinate Zn(2+).

The protein belongs to the GTP cyclohydrolase I family. As to quaternary structure, toroid-shaped homodecamer, composed of two pentamers of five dimers.

The catalysed reaction is GTP + H2O = 7,8-dihydroneopterin 3'-triphosphate + formate + H(+). Its pathway is cofactor biosynthesis; 7,8-dihydroneopterin triphosphate biosynthesis; 7,8-dihydroneopterin triphosphate from GTP: step 1/1. This chain is GTP cyclohydrolase 1, found in Bacteroides thetaiotaomicron (strain ATCC 29148 / DSM 2079 / JCM 5827 / CCUG 10774 / NCTC 10582 / VPI-5482 / E50).